The primary structure comprises 264 residues: Virulence plasmid protein pGP3-D (264 aa).

This Chlamydia psittaci (Chlamydophila psittaci) protein is Virulence plasmid protein pGP3-D.